A 657-amino-acid chain; its full sequence is Serine/threonine-protein kinase BUR1 (657 aa).

The Protein kinase domain maps to 60-366 (YREDEKLGQG…AMSAKHHPWF (307 aa)). ATP is bound by residues 66–74 (LGQGTFGEV) and lysine 89. The active-site Proton acceptor is the aspartate 195. Threonine 240 is modified (phosphothreonine; by CAK). A Phosphoserine modification is found at serine 400. Phosphothreonine is present on threonine 405. The segment at 414–657 (KGESPVVKNL…FQNSDIADLY (244 aa)) is disordered. Position 417 is a phosphoserine (serine 417). Over residues 489–501 (NNSSRNNRFSGNS) the composition is skewed to low complexity. 3 stretches are compositionally biased toward polar residues: residues 535 to 552 (SRYQ…SPND), 564 to 595 (PETN…NGSR), and 614 to 625 (ISPSQGQHQLTS). Over residues 627–649 (PIEKKNGSFKDERAKPDESKEFQ) the composition is skewed to basic and acidic residues. A Phosphoserine modification is found at serine 634.

This sequence belongs to the protein kinase superfamily. CMGC Ser/Thr protein kinase family. CDC2/CDKX subfamily. As to quaternary structure, belongs to the BUR kinase complex composed of SGV1/BUR1 and BUR2. Interacts with BUR2 and RBP1.

The protein localises to the nucleus. The enzyme catalyses L-seryl-[protein] + ATP = O-phospho-L-seryl-[protein] + ADP + H(+). It catalyses the reaction L-threonyl-[protein] + ATP = O-phospho-L-threonyl-[protein] + ADP + H(+). The catalysed reaction is [DNA-directed RNA polymerase] + ATP = phospho-[DNA-directed RNA polymerase] + ADP + H(+). Functionally, serine/threonine-protein kinase component of the BUR kinase complex involved in transcription regulation. This complex phosphorylates 'Ser-120' of the UBC2/RAD6 ubiquitin-conjugating enzyme (E2), leading to monoubiquitination of histone H2B, the localization of the PAF1 complex to the chromatin, and the silencing of telomeric-associated genes. Also required for histone H3 'Lys-4' trimethylation. May phosphorylate the 'Ser-5' of the RBP1 carboxy-terminal domain (CTD) repeats. Necessary for the recovery from pheromone-induced growth arrest in the cell cycle G1 phase. The kinase activity of the complex requires the presence of BUR2. The polypeptide is Serine/threonine-protein kinase BUR1 (SGV1) (Saccharomyces cerevisiae (strain ATCC 204508 / S288c) (Baker's yeast)).